The primary structure comprises 134 residues: Protein Turandot E (134 aa).

The first 38 residues, 1 to 38, serve as a signal peptide directing secretion; that stretch reads MSYTRTIHSSASILKMNSALQISCLLVVLGCLLGSGHC.

This sequence belongs to the Turandot family.

It is found in the secreted. Functionally, a humoral factor that may play a role in stress tolerance. This chain is Protein Turandot E, found in Drosophila sechellia (Fruit fly).